The sequence spans 188 residues: Elongation factor P (188 aa).

The tract at residues 139–163 (PVTKGQTASSSYKPATLSNGVRTQV) is disordered. The span at 142–160 (KGQTASSSYKPATLSNGVR) shows a compositional bias: polar residues.

Belongs to the elongation factor P family.

The protein localises to the cytoplasm. The protein operates within protein biosynthesis; polypeptide chain elongation. Functionally, involved in peptide bond synthesis. Stimulates efficient translation and peptide-bond synthesis on native or reconstituted 70S ribosomes in vitro. Probably functions indirectly by altering the affinity of the ribosome for aminoacyl-tRNA, thus increasing their reactivity as acceptors for peptidyl transferase. The polypeptide is Elongation factor P (Methylobacterium nodulans (strain LMG 21967 / CNCM I-2342 / ORS 2060)).